Consider the following 412-residue polypeptide: Branched-chain alpha-ketoacid dehydrogenase kinase (412 aa).

A mitochondrion-targeting transit peptide spans 1-30 (MILTSVLGSGPRSGSSLWPLLGSSLSLRVR). Position 31 is a phosphoserine (Ser31). Residues 159–404 (LDDHKDVVTL…DVYLRLRHID (246 aa)) enclose the Histidine kinase domain. N6-acetyllysine is present on residues Lys192 and Lys233. Positions 279 and 315 each coordinate ATP. Asn279 lines the Mg(2+) pocket. The K(+) site is built by Val328, Asp330, and Phe333. ATP contacts are provided by Thr334 and Thr335. Phosphoserine is present on residues Ser356 and Ser360. 3 residues coordinate ATP: His364, Gly367, and Leu370. Position 367 (Gly367) interacts with K(+).

It belongs to the PDK/BCKDK protein kinase family. Homodimer. Homotetramer. Dimerizes through interaction of two opposing nucleotide-binding domains. Interacts with E2 component of the branched-chain alpha-ketoacid dehydrogenase (BCKDH) complex. Competes with BCKDK for binding to the E2 component; this interaction is modulated by branched-chain alpha-keto acids. At steady state, BCKDH holoenzyme contains BCKDK and BCKDHA is phosphorylated. In response to high levels of branched-chain alpha-keto acids, the inhibitory BCKDK is replaced by activating PPM1K leading to BCKDHA dephosphorylation and BCAA degradation. In terms of processing, autophosphorylated. Expressed in heart and liver.

The protein resides in the mitochondrion matrix. It localises to the mitochondrion. It catalyses the reaction L-seryl-[3-methyl-2-oxobutanoate dehydrogenase] + ATP = O-phospho-L-seryl-[3-methyl-2-oxobutanoate dehydrogenase] + ADP + H(+). The catalysed reaction is L-seryl-[protein] + ATP = O-phospho-L-seryl-[protein] + ADP + H(+). Its activity is regulated as follows. The ATP-ase activity is up-regulated by potassium and rubidium ions but not by sodium ions. Up-regulated in the presence of apo- or lipoylated-DBT/E2b subunit of the BCKDH complex. In terms of biological role, serine/threonine-protein kinase component of macronutrients metabolism. Forms a functional kinase and phosphatase pair with PPM1K, serving as a metabolic regulatory node that coordinates branched-chain amino acids (BCAAs) with glucose and lipid metabolism via two distinct phosphoprotein targets: mitochondrial BCKDHA subunit of the branched-chain alpha-ketoacid dehydrogenase (BCKDH) complex and cytosolic ACLY, a lipogenic enzyme of Krebs cycle. Phosphorylates and inactivates mitochondrial BCKDH complex a multisubunit complex consisting of three multimeric components each involved in different steps of BCAA catabolism: E1 composed of BCKDHA and BCKDHB, E2 core composed of DBT monomers, and E3 composed of DLD monomers. Associates with the E2 component of BCKDH complex and phosphorylates BCKDHA on Ser-333, leading to conformational changes that interrupt substrate channeling between E1 and E2 and inactivates the BCKDH complex. phosphorylates ACLY on Ser-455 in response to changes in cellular carbohydrate abundance such as occurs during fasting to feeding metabolic transition. Refeeding stimulates MLXIPL/ChREBP transcription factor, leading to increased BCKDK to PPM1K expression ratio, phosphorylation and activation of ACLY that ultimately results in the generation of malonyl-CoA and oxaloacetate immediate substrates of de novo lipogenesis and glucogenesis, respectively. Recognizes phosphosites having SxxE/D canonical motif. The polypeptide is Branched-chain alpha-ketoacid dehydrogenase kinase (Bckdk) (Rattus norvegicus (Rat)).